The following is a 335-amino-acid chain: Nucleoid-associated protein PputGB1_0980 (335 aa).

Belongs to the YejK family.

Its subcellular location is the cytoplasm. The protein resides in the nucleoid. This is Nucleoid-associated protein PputGB1_0980 from Pseudomonas putida (strain GB-1).